The primary structure comprises 199 residues: Large ribosomal subunit protein uL13A (199 aa).

Ser2 bears the N-acetylserine mark. Lys177 is covalently cross-linked (Glycyl lysine isopeptide (Lys-Gly) (interchain with G-Cter in ubiquitin)).

This sequence belongs to the universal ribosomal protein uL13 family. As to quaternary structure, component of the large ribosomal subunit (LSU). Mature yeast ribosomes consist of a small (40S) and a large (60S) subunit. The 40S small subunit contains 1 molecule of ribosomal RNA (18S rRNA) and 33 different proteins (encoded by 57 genes). The large 60S subunit contains 3 rRNA molecules (25S, 5.8S and 5S rRNA) and 46 different proteins (encoded by 81 genes). Post-translationally, N-terminally acetylated by acetyltransferase NatA.

It localises to the cytoplasm. Functionally, component of the ribosome, a large ribonucleoprotein complex responsible for the synthesis of proteins in the cell. The small ribosomal subunit (SSU) binds messenger RNAs (mRNAs) and translates the encoded message by selecting cognate aminoacyl-transfer RNA (tRNA) molecules. The large subunit (LSU) contains the ribosomal catalytic site termed the peptidyl transferase center (PTC), which catalyzes the formation of peptide bonds, thereby polymerizing the amino acids delivered by tRNAs into a polypeptide chain. The nascent polypeptides leave the ribosome through a tunnel in the LSU and interact with protein factors that function in enzymatic processing, targeting, and the membrane insertion of nascent chains at the exit of the ribosomal tunnel. The sequence is that of Large ribosomal subunit protein uL13A from Saccharomyces cerevisiae (strain ATCC 204508 / S288c) (Baker's yeast).